Reading from the N-terminus, the 35-residue chain is Photosystem II reaction center protein T (35 aa).

A helical transmembrane segment spans residues 3–23 (ALVYTFLLVSTLGIIFFAIFF).

Belongs to the PsbT family. In terms of assembly, PSII is composed of 1 copy each of membrane proteins PsbA, PsbB, PsbC, PsbD, PsbE, PsbF, PsbH, PsbI, PsbJ, PsbK, PsbL, PsbM, PsbT, PsbY, PsbZ, Psb30/Ycf12, at least 3 peripheral proteins of the oxygen-evolving complex and a large number of cofactors. It forms dimeric complexes.

It localises to the plastid. It is found in the chloroplast thylakoid membrane. Found at the monomer-monomer interface of the photosystem II (PS II) dimer, plays a role in assembly and dimerization of PSII. PSII is a light-driven water plastoquinone oxidoreductase, using light energy to abstract electrons from H(2)O, generating a proton gradient subsequently used for ATP formation. The polypeptide is Photosystem II reaction center protein T (Asarum canadense (Wild ginger)).